We begin with the raw amino-acid sequence, 334 residues long: Adenosine deaminase (334 aa).

Zn(2+) is bound by residues H12 and H14. Substrate contacts are provided by H14, D16, and G170. H197 lines the Zn(2+) pocket. E200 serves as the catalytic Proton donor. Position 278 (D278) interacts with Zn(2+). D279 provides a ligand contact to substrate.

Belongs to the metallo-dependent hydrolases superfamily. Adenosine and AMP deaminases family. Adenosine deaminase subfamily. Zn(2+) is required as a cofactor.

The enzyme catalyses adenosine + H2O + H(+) = inosine + NH4(+). It catalyses the reaction 2'-deoxyadenosine + H2O + H(+) = 2'-deoxyinosine + NH4(+). Catalyzes the hydrolytic deamination of adenosine and 2-deoxyadenosine. The polypeptide is Adenosine deaminase (Yersinia pseudotuberculosis serotype IB (strain PB1/+)).